Consider the following 129-residue polypeptide: Small ribosomal subunit protein uS12 (129 aa).

A disordered region spans residues 1–25 (MPTYNQLVRFGRKSKTRKTKSPALE). Residues 10–20 (FGRKSKTRKTK) are compositionally biased toward basic residues. Asp89 is modified (3-methylthioaspartic acid). The interval 109–129 (GRKQGRSRYGTPRKQVAVTKK) is disordered.

The protein belongs to the universal ribosomal protein uS12 family. As to quaternary structure, part of the 30S ribosomal subunit. Contacts proteins S8 and S17. May interact with IF1 in the 30S initiation complex.

Its function is as follows. With S4 and S5 plays an important role in translational accuracy. Interacts with and stabilizes bases of the 16S rRNA that are involved in tRNA selection in the A site and with the mRNA backbone. Located at the interface of the 30S and 50S subunits, it traverses the body of the 30S subunit contacting proteins on the other side and probably holding the rRNA structure together. The combined cluster of proteins S8, S12 and S17 appears to hold together the shoulder and platform of the 30S subunit. The sequence is that of Small ribosomal subunit protein uS12 from Rickettsia peacockii (strain Rustic).